The chain runs to 485 residues: Adenosylhomocysteinase (485 aa).

The substrate site is built by Thr-60, Asp-146, and Glu-208. Thr-209 to Thr-211 is an NAD(+) binding site. Substrate contacts are provided by Lys-238 and Asp-242. NAD(+)-binding positions include Asn-243, Gly-272–Gly-277, Glu-295, Asn-330, Ile-351–His-353, and Asn-399.

This sequence belongs to the adenosylhomocysteinase family. The cofactor is NAD(+).

It localises to the cytoplasm. The catalysed reaction is S-adenosyl-L-homocysteine + H2O = L-homocysteine + adenosine. It functions in the pathway amino-acid biosynthesis; L-homocysteine biosynthesis; L-homocysteine from S-adenosyl-L-homocysteine: step 1/1. Its function is as follows. May play a key role in the regulation of the intracellular concentration of adenosylhomocysteine. This Streptomyces griseus subsp. griseus (strain JCM 4626 / CBS 651.72 / NBRC 13350 / KCC S-0626 / ISP 5235) protein is Adenosylhomocysteinase.